The primary structure comprises 54 residues: Large ribosomal subunit protein bL32c (54 aa).

Belongs to the bacterial ribosomal protein bL32 family.

The protein resides in the plastid. The protein localises to the chloroplast. The polypeptide is Large ribosomal subunit protein bL32c (Panax ginseng (Korean ginseng)).